The following is a 228-amino-acid chain: MQKLKQQVFDANMDLPRYGLVTFTWGNVSAIDRERGLVVIKPSGVAYETMKVDDMVVVDMDGKVVEGRYRPSSDTATHLALYQRYPSLGGVVHTHSTHATAWAQAGMAIPALGTTHADYFFGDIPCTRALSEEEVQGEYELNTGKVIIETLGEVEPLHTPGIVVYQHGPFAWGKDAHDAVHNAVVMEEVARMAWIARGINPGLNPIDDYLMNKHFMRKHGPNAYYGQK.

Substrate contacts are provided by residues Gly-26–Asn-27, Ser-43–Gly-44, and Ser-72–Ser-73. Asp-74, His-93, and His-95 together coordinate Zn(2+). Asp-118 functions as the Proton donor/acceptor in the catalytic mechanism. His-167 provides a ligand contact to Zn(2+). Tyr-225 (proton donor/acceptor) is an active-site residue.

Belongs to the aldolase class II family. AraD/FucA subfamily. It depends on Zn(2+) as a cofactor.

It carries out the reaction L-ribulose 5-phosphate = D-xylulose 5-phosphate. It functions in the pathway cofactor degradation; L-ascorbate degradation; D-xylulose 5-phosphate from L-ascorbate: step 4/4. In terms of biological role, catalyzes the isomerization of L-ribulose 5-phosphate to D-xylulose 5-phosphate. Is involved in the anaerobic L-ascorbate utilization. The protein is L-ribulose-5-phosphate 4-epimerase UlaF of Salmonella paratyphi A (strain ATCC 9150 / SARB42).